Consider the following 157-residue polypeptide: Mitochondrial inner membrane protease subunit 1 (157 aa).

Active-site residues include serine 35 and lysine 80.

This sequence belongs to the peptidase S26 family. IMP1 subfamily. Heterodimer of 2 subunits, imp1 and imp2.

It localises to the mitochondrion inner membrane. Catalyzes the removal of transit peptides required for the targeting of proteins from the mitochondrial matrix, across the inner membrane, into the inter-membrane space. The protein is Mitochondrial inner membrane protease subunit 1 (imp1) of Schizosaccharomyces pombe (strain 972 / ATCC 24843) (Fission yeast).